Here is a 545-residue protein sequence, read N- to C-terminus: ATP synthase subunit alpha (545 aa).

173-180 (GDRQTGKT) is an ATP binding site.

This sequence belongs to the ATPase alpha/beta chains family. In terms of assembly, F-type ATPases have 2 components, CF(1) - the catalytic core - and CF(0) - the membrane proton channel. CF(1) has five subunits: alpha(3), beta(3), gamma(1), delta(1), epsilon(1). CF(0) has three main subunits: a(1), b(2) and c(9-12). The alpha and beta chains form an alternating ring which encloses part of the gamma chain. CF(1) is attached to CF(0) by a central stalk formed by the gamma and epsilon chains, while a peripheral stalk is formed by the delta and b chains.

It is found in the cell membrane. It carries out the reaction ATP + H2O + 4 H(+)(in) = ADP + phosphate + 5 H(+)(out). In terms of biological role, produces ATP from ADP in the presence of a proton gradient across the membrane. The alpha chain is a regulatory subunit. This chain is ATP synthase subunit alpha, found in Clavibacter michiganensis subsp. michiganensis (strain NCPPB 382).